The sequence spans 277 residues: Phosphate import ATP-binding protein PstB 2 (277 aa).

The ABC transporter domain occupies 31 to 272; that stretch reads IEVPGLNLFY…PAKKQTEDYI (242 aa). An ATP-binding site is contributed by 63-70; that stretch reads GPSGCGKS.

The protein belongs to the ABC transporter superfamily. Phosphate importer (TC 3.A.1.7) family. In terms of assembly, the complex is composed of two ATP-binding proteins (PstB), two transmembrane proteins (PstC and PstA) and a solute-binding protein (PstS).

It localises to the cell inner membrane. It carries out the reaction phosphate(out) + ATP + H2O = ADP + 2 phosphate(in) + H(+). Functionally, part of the ABC transporter complex PstSACB involved in phosphate import. Responsible for energy coupling to the transport system. This Pseudomonas syringae pv. syringae (strain B728a) protein is Phosphate import ATP-binding protein PstB 2.